Consider the following 905-residue polypeptide: Probable aromatic-L-amino-acid decarboxylase (905 aa).

The disordered stretch occupies residues 250 to 296 (YLNPIIKTPPHNERVPKMKTNISKTRKKKGKVSDASKDSRPSETKKE). Positions 280 to 296 (KVSDASKDSRPSETKKE) are enriched in basic and acidic residues. Thr492 and Ser591 together coordinate pyridoxal 5'-phosphate. Lys648 carries the N6-(pyridoxal phosphate)lysine modification. Residues 861–905 (HTAEYADPPGKSNKSPQVAAKGELPSAAPPSSRTPNSDISEKSDR) are disordered. Residues 889–898 (PPSSRTPNSD) show a composition bias toward polar residues.

This sequence belongs to the group II decarboxylase family. Homodimer. It depends on pyridoxal 5'-phosphate as a cofactor.

It carries out the reaction L-dopa + H(+) = dopamine + CO2. The catalysed reaction is 5-hydroxy-L-tryptophan + H(+) = serotonin + CO2. Its pathway is catecholamine biosynthesis; dopamine biosynthesis; dopamine from L-tyrosine: step 2/2. In terms of biological role, catalyzes the decarboxylation of L-3,4-dihydroxyphenylalanine (DOPA) to dopamine, L-5-hydroxytryptophan to serotonin and L-tryptophan to tryptamine. In Caenorhabditis elegans, this protein is Probable aromatic-L-amino-acid decarboxylase (hdl-1).